A 179-amino-acid polypeptide reads, in one-letter code: Large ribosomal subunit protein uL5 (179 aa).

This sequence belongs to the universal ribosomal protein uL5 family. As to quaternary structure, part of the 50S ribosomal subunit; part of the 5S rRNA/L5/L18/L25 subcomplex. Contacts the 5S rRNA and the P site tRNA. Forms a bridge to the 30S subunit in the 70S ribosome.

In terms of biological role, this is one of the proteins that bind and probably mediate the attachment of the 5S RNA into the large ribosomal subunit, where it forms part of the central protuberance. In the 70S ribosome it contacts protein S13 of the 30S subunit (bridge B1b), connecting the 2 subunits; this bridge is implicated in subunit movement. Contacts the P site tRNA; the 5S rRNA and some of its associated proteins might help stabilize positioning of ribosome-bound tRNAs. In Desulfotalea psychrophila (strain LSv54 / DSM 12343), this protein is Large ribosomal subunit protein uL5.